The primary structure comprises 374 residues: Type IV secretion system protein PtlG (374 aa).

A helical membrane pass occupies residues 38–56 (WMFALVAVALSCLLATGIW). A disordered region spans residues 86 to 117 (HPREPEPAPLPDMPAAPDPILPQPRPAPPVPP). A compositionally biased stretch (pro residues) spans 92 to 117 (PAPLPDMPAAPDPILPQPRPAPPVPP).

It belongs to the TrbI/VirB10 family.

It is found in the cell membrane. Its function is as follows. Component of the type IV secretion system ptl required for secretion of assembled pertussis toxin (PTX) through the outer membrane. The protein is Type IV secretion system protein PtlG (ptlG) of Bordetella pertussis (strain Tohama I / ATCC BAA-589 / NCTC 13251).